Reading from the N-terminus, the 180-residue chain is Insulin-like growth factor 2 (180 aa).

Positions 1–24 (MGIPVGKSMLVLLISLAFALCCIA) are cleaved as a signal peptide. Residues 25–52 (AYGPGETLCGGELVDTLQFVCSDRGFYF) form a b region. Disulfide bonds link C33–C71, C45–C84, and C70–C75. Residues 53–64 (SRPSSRANRRSR) form a c region. Residues 65–85 (GIVEECCFRSCDLALLETYCA) form an a region. The d stretch occupies residues 86-91 (TPAKSE). A propeptide spans 92 to 180 (RDVSTSQAVL…ASSEMSSNHQ (89 aa)) (e peptide). The interval 157–180 (PLIVLPPKDPAHGGASSEMSSNHQ) is disordered.

It belongs to the insulin family. In terms of assembly, interacts with MYORG; this interaction is required for IGF2 secretion. Interacts with integrins ITGAV:ITGB3 and ITGA6:ITGB4; integrin-binding is required for IGF2 signaling. Interacts with IGFBP2. Post-translationally, proteolytically processed by PCSK4, proIGF2 is cleaved at Arg-128 and Arg-92 to generate big-IGF2 and mature IGF2. In terms of tissue distribution, expressed in the heart, blood serum, kidney and skeletal muscle including the tibialis anterior muscle.

The protein resides in the secreted. The insulin-like growth factors possess growth-promoting activity. Major fetal growth hormone in mammals. Plays a key role in regulating fetoplacental development. IGF2 is influenced by placental lactogen. Also involved in tissue differentiation. In adults, involved in glucose metabolism in adipose tissue, skeletal muscle and liver. Acts as a ligand for integrin which is required for IGF2 signaling. Positively regulates myogenic transcription factor MYOD1 function by facilitating the recruitment of transcriptional coactivators, thereby controlling muscle terminal differentiation. Inhibits myoblast differentiation and modulates metabolism via increasing the mitochondrial respiration rate. In terms of biological role, preptin undergoes glucose-mediated co-secretion with insulin, and acts as a physiological amplifier of glucose-mediated insulin secretion. Exhibits osteogenic properties by increasing osteoblast mitogenic activity through phosphoactivation of MAPK1 and MAPK3. In Mus musculus (Mouse), this protein is Insulin-like growth factor 2.